Reading from the N-terminus, the 607-residue chain is CUB and zona pellucida-like domain-containing protein 1 (607 aa).

The first 19 residues, 1-19 (MEVTGRLFIWAILAVSCRA), serve as a signal peptide directing secretion. The Lumenal segment spans residues 20–568 (QLNSTAAEGR…AEISKQPLSH (549 aa)). Asparagine 22 carries N-linked (GlcNAc...) asparagine glycosylation. Cysteine 32 and cysteine 58 are joined by a disulfide. 2 consecutive CUB domains span residues 32-146 (CTAS…YFFS) and 154-265 (CGGY…YAST). Asparagine 67 carries N-linked (GlcNAc...) asparagine glycosylation. Cystine bridges form between cysteine 85–cysteine 107 and cysteine 154–cysteine 180. Asparagine 195 carries an N-linked (GlcNAc...) asparagine glycan. An intrachain disulfide couples cysteine 207 to cysteine 229. One can recognise a ZP domain in the interval 276–519 (SCASDKMRVI…SRCNQGCVSR (244 aa)). An N-linked (GlcNAc...) asparagine glycan is attached at asparagine 419. Cysteine 442 and cysteine 498 are oxidised to a cystine. A helical membrane pass occupies residues 569–589 (LHLFSFMVLALNVVIVVTATV). Residues 590–607 (RHFLNRWKDHGYQKLQVY) lie on the Cytoplasmic side of the membrane.

Expressed predominantly in epithelium of uterus and oviduct.

Its subcellular location is the zymogen granule membrane. Functionally, localized to zymogen granules, where it functions in trypsinogen activation. May indirectly regulate cell motility, cell-cell and cell/extracellular matrix interactions. This Rattus norvegicus (Rat) protein is CUB and zona pellucida-like domain-containing protein 1.